A 122-amino-acid polypeptide reads, in one-letter code: LYR motif-containing protein 1 (122 aa).

Belongs to the complex I LYR family. High levels in adipose tissue.

It is found in the nucleus. Functionally, may promote cell proliferation and inhibition of apoptosis of preadipocytes. This chain is LYR motif-containing protein 1 (LYRM1), found in Homo sapiens (Human).